A 370-amino-acid chain; its full sequence is G-protein coupled receptor homolog K2 (370 aa).

Topologically, residues 1–61 (MTSPTNSTML…CTFLEDTKYH (61 aa)) are extracellular. Residues asparagine 6 and asparagine 51 are each glycosylated (N-linked (GlcNAc...) asparagine; by host). Residues 62–82 (IIVIHIILFLLGSIGNIFVVS) traverse the membrane as a helical segment. The Cytoplasmic portion of the chain corresponds to 83 to 94 (LIAFKRNKSITD). The helical transmembrane segment at 95-115 (IYILNLSMSDCIFVFQIPFIV) threads the bilayer. Residues 116–131 (YSKLDQWIFGNILCKI) lie on the Extracellular side of the membrane. The helical transmembrane segment at 132–152 (MSVLYYVGFFSNMFIITLMSI) threads the bilayer. Residues 153 to 171 (DRYFAIVHPIKRQPYRTKR) are Cytoplasmic-facing. A helical transmembrane segment spans residues 172–192 (IGILMCCSAWLLSLILSSPVS). At 193-223 (KLYENIPHMSKDIYQCTLTNENDSIIAFIKR) the chain is on the extracellular side. A helical transmembrane segment spans residues 224–244 (LMQIEITILGFLIPIIIFVYC). The Cytoplasmic segment spans residues 245-265 (YYRIFTTVVRLRNRRKYKSIK). The chain crosses the membrane as a helical span at residues 266–286 (IVLMIVVCSLICWIPLYIVLM). Residues 287–300 (IATIVSLYTSNIFR) lie on the Extracellular side of the membrane. Residues 301 to 321 (HLCLYLNLAYAITFSETISLA) traverse the membrane as a helical segment. Topologically, residues 322–370 (RCCINPIIYTLIGEHVRSRISSICSCIYRDNRIRKKLFSRKSSSSSNII) are cytoplasmic.

Belongs to the G-protein coupled receptor 1 family.

Its subcellular location is the host cell membrane. In terms of biological role, putative chemokine receptor. The sequence is that of G-protein coupled receptor homolog K2 from Sus scrofa (Pig).